Reading from the N-terminus, the 318-residue chain is D-alanine--D-alanine ligase B (318 aa).

Positions 116-311 (KQVWQSLGIP…FQQLVLAILA (196 aa)) constitute an ATP-grasp domain. 142-197 (STELGFPLIVKPAHEGSSIGMAKVNSTQELVAAWQDAAKYDSQVLVEQWIHGPEFT) contacts ATP. Residues D265, E278, and N280 each contribute to the Mg(2+) site.

Belongs to the D-alanine--D-alanine ligase family. Mg(2+) serves as cofactor. Requires Mn(2+) as cofactor.

The protein resides in the cytoplasm. It catalyses the reaction 2 D-alanine + ATP = D-alanyl-D-alanine + ADP + phosphate + H(+). It functions in the pathway cell wall biogenesis; peptidoglycan biosynthesis. Functionally, cell wall formation. This chain is D-alanine--D-alanine ligase B, found in Pseudomonas putida (strain ATCC 47054 / DSM 6125 / CFBP 8728 / NCIMB 11950 / KT2440).